A 233-amino-acid chain; its full sequence is uncharacterized protein (233 aa).

Positions Met1–Pro23 are cleaved as a signal peptide. Residues Leu42 to Cys217 form a disordered region. Low complexity predominate over residues Asn45–Pro64. The segment covering His65 to His211 has biased composition (basic residues).

Its subcellular location is the secreted. This is an uncharacterized protein from Dictyostelium discoideum (Social amoeba).